The chain runs to 446 residues: MSYIKFDSSKLDKFVHANELEQMQPLVTAADKELREGTGAGKDFRGFIDLPVNYDKDEFARIKAAAKKVQGNSQVFVAIGIGGSYLGARMAVDFLSQTFRNLDPDLKFPEVYFAGNSISGTYLADLLDIIGDRDFSINVISKSGTTTEPSIAFRVLKAKLIEKYGKDGAKERIYATTDRAKGALKQEADAEGYEEFVVPDDVGGRFSVMSAVGLLPIAVAGGDIDEMMRGLGDGRKAYASADLKENEAYQYAALRNILYRKGYTTELLENYEPTLQYLGEWWKQLMGESEGKDQKGIYPSSANFSTDLHSLGQYIQEGLRNLMETVVWVEEPNRDLTIPEDANNLDGLGYLAGKKMSFVNRKAYEGVVLAHTDGGVPVMTVSIPKQDAYTLGYLIYFFEAAVSISGYLNGINPFNQPGVEAYKKNMFALLGRPGYEDMTKELNARL.

The active-site Proton donor is glutamate 288. Residues histidine 309 and lysine 423 contribute to the active site.

Belongs to the GPI family.

Its subcellular location is the cytoplasm. It carries out the reaction alpha-D-glucose 6-phosphate = beta-D-fructose 6-phosphate. The protein operates within carbohydrate biosynthesis; gluconeogenesis. Its pathway is carbohydrate degradation; glycolysis; D-glyceraldehyde 3-phosphate and glycerone phosphate from D-glucose: step 2/4. Functionally, catalyzes the reversible isomerization of glucose-6-phosphate to fructose-6-phosphate. The chain is Glucose-6-phosphate isomerase from Lacticaseibacillus casei (strain BL23) (Lactobacillus casei).